Reading from the N-terminus, the 197-residue chain is Glycerol-3-phosphate acyltransferase (197 aa).

Transmembrane regions (helical) follow at residues 1–21 (MNILIIFVSYLLGSLPTGFLI), 50–70 (WPALIVFIIDVGKGLIAVKIA), 77–97 (GLIEVIAGISAITGHIWPIWL), 111–131 (MFLALSWKVGLASLGIFLIVL), 136–156 (FVSLSSISAAIFLPFFMFFYL), and 157–177 (GNYMHSYFFISLIVALLVIWK).

This sequence belongs to the PlsY family. In terms of assembly, probably interacts with PlsX.

It is found in the cell inner membrane. It catalyses the reaction an acyl phosphate + sn-glycerol 3-phosphate = a 1-acyl-sn-glycero-3-phosphate + phosphate. It participates in lipid metabolism; phospholipid metabolism. Functionally, catalyzes the transfer of an acyl group from acyl-phosphate (acyl-PO(4)) to glycerol-3-phosphate (G3P) to form lysophosphatidic acid (LPA). This enzyme utilizes acyl-phosphate as fatty acyl donor, but not acyl-CoA or acyl-ACP. The chain is Glycerol-3-phosphate acyltransferase from Prochlorococcus marinus (strain MIT 9312).